The following is a 362-amino-acid chain: tRNA-specific 2-thiouridylase MnmA (362 aa).

ATP-binding positions include 6 to 13 and leucine 32; that span reads AMSGGVDS. Residue cysteine 101 is the Nucleophile of the active site. A disulfide bridge connects residues cysteine 101 and cysteine 197. Residue glycine 125 coordinates ATP. The tract at residues 147–149 is interaction with tRNA; sequence KDQ. Cysteine 197 functions as the Cysteine persulfide intermediate in the catalytic mechanism.

The protein belongs to the MnmA/TRMU family.

The protein resides in the cytoplasm. It catalyses the reaction S-sulfanyl-L-cysteinyl-[protein] + uridine(34) in tRNA + AH2 + ATP = 2-thiouridine(34) in tRNA + L-cysteinyl-[protein] + A + AMP + diphosphate + H(+). In terms of biological role, catalyzes the 2-thiolation of uridine at the wobble position (U34) of tRNA, leading to the formation of s(2)U34. This is tRNA-specific 2-thiouridylase MnmA from Acidothermus cellulolyticus (strain ATCC 43068 / DSM 8971 / 11B).